Here is a 229-residue protein sequence, read N- to C-terminus: 2-C-methyl-D-erythritol 4-phosphate cytidylyltransferase (229 aa).

The protein belongs to the IspD/TarI cytidylyltransferase family. IspD subfamily.

The catalysed reaction is 2-C-methyl-D-erythritol 4-phosphate + CTP + H(+) = 4-CDP-2-C-methyl-D-erythritol + diphosphate. The protein operates within isoprenoid biosynthesis; isopentenyl diphosphate biosynthesis via DXP pathway; isopentenyl diphosphate from 1-deoxy-D-xylulose 5-phosphate: step 2/6. In terms of biological role, catalyzes the formation of 4-diphosphocytidyl-2-C-methyl-D-erythritol from CTP and 2-C-methyl-D-erythritol 4-phosphate (MEP). This is 2-C-methyl-D-erythritol 4-phosphate cytidylyltransferase from Shouchella clausii (strain KSM-K16) (Alkalihalobacillus clausii).